Reading from the N-terminus, the 564-residue chain is MLAGVLLLQSWLKANYPQVQFGSYGVQEGEFYLDFKVEKSFSIKEFEQLEQDLNAYFNQLNNVVQTKIDKTKSLKFFQADPFTTTLIESIESNSLVVTTVNEQTFWVHDLVLPLPKQGFVKLLNVSANYFLGDPTKPQLQRLVGIFAASKEQLKSLIAANEQKYQNDHRAIGKRLEIFTFDPLVGAGFPIWLEKGAVLKKIIGDFVHYQQLMFGFKTVSSPVLANLELYKISGHYVHYSEDMFPSVKLENQMMMLRPMTCPHHCLIFKHKRRSYKELPQRFCEDSILHRFEASGGLTGLERVRCMTLLDNHIFCRTDQIKAEIKNAFKLIQTVNNKFGFSFDRIDLALHDPNNKAKFIDNDQLWANSESQIESVFKELNVPYKIDVGAAAFYGPKIDFQFKTALNKMITIATIQLDFLLPERFELRYFDEQSNAQTPVIIHVGIVGTYERFIAALLEKTHGNLPLWMAPVQVVVIPVNIDKHEKAAKKLYQKLLKENIRVSLDESEDRLGKKVRTAIVNKIPLQIIVGDKEMQDLTRITCRGFKGEKVQKLYWANFVKKVRKDG.

Residues 167 to 464 (DHRAIGKRLE…LLEKTHGNLP (298 aa)) are catalytic. 3 residues coordinate Zn(2+): Cys260, His311, and His441.

This sequence belongs to the class-II aminoacyl-tRNA synthetase family. Homodimer. Requires Zn(2+) as cofactor.

It localises to the cytoplasm. It catalyses the reaction tRNA(Thr) + L-threonine + ATP = L-threonyl-tRNA(Thr) + AMP + diphosphate + H(+). In terms of biological role, catalyzes the attachment of threonine to tRNA(Thr) in a two-step reaction: L-threonine is first activated by ATP to form Thr-AMP and then transferred to the acceptor end of tRNA(Thr). Also edits incorrectly charged L-seryl-tRNA(Thr). The protein is Threonine--tRNA ligase of Mycoplasma pneumoniae (strain ATCC 29342 / M129 / Subtype 1) (Mycoplasmoides pneumoniae).